Here is a 1052-residue protein sequence, read N- to C-terminus: Membrane-bound transcription factor site-1 protease (1052 aa).

A signal peptide spans 1–17 (MKLVSTWLLVLVVLLCG). The propeptide occupies 18–186 (KRHLGDRLGT…TGRHSSRRLL (169 aa)). An N-linked (GlcNAc...) asparagine glycan is attached at asparagine 148. Serine 168 is subject to Phosphoserine. The Lumenal portion of the chain corresponds to 187–999 (RAIPRQVAQT…MPGRYNQEVG (813 aa)). A Peptidase S8 domain is found at 190–472 (PRQVAQTLQA…HGKLDLLRAY (283 aa)). Aspartate 218 acts as the Charge relay system in catalysis. Asparagine 236 carries N-linked (GlcNAc...) asparagine glycosylation. Catalysis depends on histidine 249, which acts as the Charge relay system. Asparagine 305 is a glycosylation site (N-linked (GlcNAc...) asparagine). The Charge relay system role is filled by serine 414. 2 N-linked (GlcNAc...) asparagine glycosylation sites follow: asparagine 515 and asparagine 728. Residues 877-887 (PSLSHSGNRQR) show a composition bias toward polar residues. A disordered region spans residues 877 to 900 (PSLSHSGNRQRPPSGAGLAPPERM). An N-linked (GlcNAc...) asparagine glycan is attached at asparagine 939. A helical membrane pass occupies residues 1000-1022 (QTIPVFAFLGAMVALAFFVVQIS). At 1023–1052 (KAKSRPKRRRPRAKRPQLAQQAHPARTPSV) the chain is on the cytoplasmic side. The span at 1026–1037 (SRPKRRRPRAKR) shows a compositional bias: basic residues. The interval 1026-1052 (SRPKRRRPRAKRPQLAQQAHPARTPSV) is disordered.

It belongs to the peptidase S8 family. Interacts with LYSET; this interaction bridges GNPTAB to MBTPS1. Ca(2+) is required as a cofactor. In terms of processing, the 148 kDa zymogen is processed progressively into two membrane-bound 120 and 106 kDa forms in the endoplasmic reticulum, and late into a secreted 98 kDa form. The propeptide is autocatalytically removed through an intramolecular cleavage after Leu-186. Further cleavage generates 14, 10, and 8 kDa intermediates.

The protein localises to the endoplasmic reticulum membrane. Its subcellular location is the golgi apparatus membrane. It catalyses the reaction Processes precursors containing basic and hydrophobic/aliphatic residues at P4 and P2, respectively, with a relatively relaxed acceptance of amino acids at P1 and P3.. With respect to regulation, inhibited by divalent copper and zinc ions, but not by nickel or cobalt. Inhibited by its prosegment, but not smaller fragments. Inhibited by 4-(2-aminoethyl)benzenesulfonyl fluoride (AEBSF), a serine protease inhibitor. Serine protease that cleaves after hydrophobic or small residues, provided that Arg or Lys is in position P4: known substrates include SREBF1/SREBP1, SREBF2/SREBP2, BDNF, GNPTAB, ATF6, ATF6B and FAM20C. Cleaves substrates after Arg-Ser-Val-Leu (SREBP2), Arg-His-Leu-Leu (ATF6), Arg-Gly-Leu-Thr (BDNF) and its own propeptide after Arg-Arg-Leu-Leu. Catalyzes the first step regulated intramembrane proteolysis activation of the sterol regulatory element-binding proteins (SREBPs) SREBF1/SREBP1 and SREBF2/SREBP2. Also mediates the first step of the regulated intramembrane proteolytic activation of the cyclic AMP-dependent transcription factor ATF-6 (ATF6 and ATF6B). Mediates the protein cleavage of GNPTAB into subunit alpha and beta, thereby participating in biogenesis of lysosomes. Cleaves the propeptide from FAM20C which is required for FAM20C secretion from the Golgi apparatus membrane and for enhancement of FAM20C kinase activity, promoting osteoblast differentiation and biomineralization. Involved in the regulation of M6P-dependent Golgi-to-lysosome trafficking of lysosomal enzymes. It is required for the activation of CREB3L2/BBF2H7, a transcriptional activator of MIA3/TANGO and other genes controlling mega vesicle formation. Therefore, it plays a key role in the regulation of mega vesicle-mediated collagen trafficking. In astrocytes and osteoblasts, upon DNA damage and ER stress, mediates the first step of the regulated intramembrane proteolytic activation of the transcription factor CREB3L1, leading to the inhibition of cell-cycle progression. The sequence is that of Membrane-bound transcription factor site-1 protease (Mbtps1) from Mus musculus (Mouse).